The sequence spans 682 residues: Protein SYG1 homolog (682 aa).

The 219-residue stretch at methionine 1–aspartate 219 folds into the SPX domain. The Cytoplasmic segment spans residues methionine 1 to arginine 274. A helical transmembrane segment spans residues phenylalanine 275–alanine 295. Residues threonine 296–serine 300 lie on the Extracellular side of the membrane. The chain crosses the membrane as a helical span at residues tyrosine 301–leucine 321. At aspartate 322–arginine 348 the chain is on the cytoplasmic side. Residues glutamine 349–methionine 369 form a helical membrane-spanning segment. The Extracellular portion of the chain corresponds to arginine 370–threonine 377. The chain crosses the membrane as a helical span at residues isoleucine 378–valine 398. Over proline 399–tyrosine 406 the chain is Cytoplasmic. The chain crosses the membrane as a helical span at residues leucine 407 to phenylalanine 424. Topologically, residues glutamine 425–aspartate 426 are extracellular. A helical transmembrane segment spans residues phenylalanine 427 to phenylalanine 447. Residues cysteine 448–arginine 525 lie on the Cytoplasmic side of the membrane. Residues leucine 459–serine 654 form the EXS domain. A helical transmembrane segment spans residues valine 526–methionine 546. Topologically, residues aspartate 547–proline 571 are extracellular. The helical transmembrane segment at tyrosine 572–phenylalanine 592 threads the bilayer. Residues proline 593–serine 682 are Cytoplasmic-facing. Residues serine 659 to serine 682 form a disordered region. A compositionally biased stretch (acidic residues) spans aspartate 665–serine 682.

Belongs to the SYG1 (TC 2.A.94) family.

The protein resides in the cell membrane. May function in G-protein coupled signal transduction. The polypeptide is Protein SYG1 homolog (Schizosaccharomyces pombe (strain 972 / ATCC 24843) (Fission yeast)).